We begin with the raw amino-acid sequence, 440 residues long: Thymidine phosphorylase (440 aa).

The protein belongs to the thymidine/pyrimidine-nucleoside phosphorylase family. Homodimer.

The catalysed reaction is thymidine + phosphate = 2-deoxy-alpha-D-ribose 1-phosphate + thymine. It participates in pyrimidine metabolism; dTMP biosynthesis via salvage pathway; dTMP from thymine: step 1/2. Functionally, the enzymes which catalyze the reversible phosphorolysis of pyrimidine nucleosides are involved in the degradation of these compounds and in their utilization as carbon and energy sources, or in the rescue of pyrimidine bases for nucleotide synthesis. This Salmonella dublin (strain CT_02021853) protein is Thymidine phosphorylase.